The sequence spans 647 residues: tRNA 5-methylaminomethyl-2-thiouridine biosynthesis bifunctional protein MnmC (647 aa).

Residues 1-227 (MLTWKNNLTP…KREMLIGSYS (227 aa)) form a tRNA (mnm(5)s(2)U34)-methyltransferase region. The interval 256–647 (VGAGIAGTTL…ARFLYRKVRK (392 aa)) is FAD-dependent cmnm(5)s(2)U34 oxidoreductase.

It in the N-terminal section; belongs to the methyltransferase superfamily. tRNA (mnm(5)s(2)U34)-methyltransferase family. This sequence in the C-terminal section; belongs to the DAO family. The cofactor is FAD.

The protein localises to the cytoplasm. The catalysed reaction is 5-aminomethyl-2-thiouridine(34) in tRNA + S-adenosyl-L-methionine = 5-methylaminomethyl-2-thiouridine(34) in tRNA + S-adenosyl-L-homocysteine + H(+). Its function is as follows. Catalyzes the last two steps in the biosynthesis of 5-methylaminomethyl-2-thiouridine (mnm(5)s(2)U) at the wobble position (U34) in tRNA. Catalyzes the FAD-dependent demodification of cmnm(5)s(2)U34 to nm(5)s(2)U34, followed by the transfer of a methyl group from S-adenosyl-L-methionine to nm(5)s(2)U34, to form mnm(5)s(2)U34. In Leptospira interrogans serogroup Icterohaemorrhagiae serovar Lai (strain 56601), this protein is tRNA 5-methylaminomethyl-2-thiouridine biosynthesis bifunctional protein MnmC.